A 71-amino-acid polypeptide reads, in one-letter code: Large ribosomal subunit protein bL32c (71 aa).

The disordered stretch occupies residues methionine 1 to lysine 24.

It belongs to the bacterial ribosomal protein bL32 family.

The protein localises to the plastid. Its subcellular location is the chloroplast. In Pinus koraiensis (Korean pine), this protein is Large ribosomal subunit protein bL32c.